The chain runs to 643 residues: Phosphomethylpyrimidine synthase (643 aa).

Substrate contacts are provided by residues Asn-248, Met-277, Tyr-306, His-342, 362-364 (SRG), 403-406 (DGLR), and Glu-442. His-446 contributes to the Zn(2+) binding site. Tyr-469 is a binding site for substrate. His-510 contacts Zn(2+). The [4Fe-4S] cluster site is built by Cys-590, Cys-593, and Cys-598.

The protein belongs to the ThiC family. In terms of assembly, homodimer. [4Fe-4S] cluster is required as a cofactor.

The catalysed reaction is 5-amino-1-(5-phospho-beta-D-ribosyl)imidazole + S-adenosyl-L-methionine = 4-amino-2-methyl-5-(phosphooxymethyl)pyrimidine + CO + 5'-deoxyadenosine + formate + L-methionine + 3 H(+). The protein operates within cofactor biosynthesis; thiamine diphosphate biosynthesis. Catalyzes the synthesis of the hydroxymethylpyrimidine phosphate (HMP-P) moiety of thiamine from aminoimidazole ribotide (AIR) in a radical S-adenosyl-L-methionine (SAM)-dependent reaction. This is Phosphomethylpyrimidine synthase from Paraburkholderia xenovorans (strain LB400).